The sequence spans 436 residues: Histidine--tRNA ligase 1 (436 aa).

Belongs to the class-II aminoacyl-tRNA synthetase family. In terms of assembly, homodimer.

The protein resides in the cytoplasm. The enzyme catalyses tRNA(His) + L-histidine + ATP = L-histidyl-tRNA(His) + AMP + diphosphate + H(+). This chain is Histidine--tRNA ligase 1, found in Bacillus cereus (strain ATCC 10987 / NRS 248).